Here is a 225-residue protein sequence, read N- to C-terminus: Protein-L-isoaspartate O-methyltransferase (225 aa).

S-adenosyl-L-homocysteine contacts are provided by residues 57 to 60, histidine 65, serine 89, 110 to 111, 142 to 143, threonine 216, and glutamine 221; these read ATVS, EH, and DG. Serine 60 is a catalytic residue.

Belongs to the methyltransferase superfamily. L-isoaspartyl/D-aspartyl protein methyltransferase family. As to quaternary structure, monomer.

It is found in the cytoplasm. Its subcellular location is the cytosol. It carries out the reaction [protein]-L-isoaspartate + S-adenosyl-L-methionine = [protein]-L-isoaspartate alpha-methyl ester + S-adenosyl-L-homocysteine. Initiates the repair of damaged proteins by catalyzing methyl esterification of L-isoaspartyl and D-aspartyl residues produced by spontaneous isomerization and racemization of L-aspartyl and L-asparaginyl residues in aging peptides and proteins. The polypeptide is Protein-L-isoaspartate O-methyltransferase (pcm-1) (Caenorhabditis elegans).